We begin with the raw amino-acid sequence, 540 residues long: Glucose-6-phosphate isomerase (540 aa).

The active-site Proton donor is the Glu-346. Catalysis depends on residues His-377 and Lys-505.

The protein belongs to the GPI family.

The protein resides in the cytoplasm. It carries out the reaction alpha-D-glucose 6-phosphate = beta-D-fructose 6-phosphate. Its pathway is carbohydrate biosynthesis; gluconeogenesis. It participates in carbohydrate degradation; glycolysis; D-glyceraldehyde 3-phosphate and glycerone phosphate from D-glucose: step 2/4. In terms of biological role, catalyzes the reversible isomerization of glucose-6-phosphate to fructose-6-phosphate. The polypeptide is Glucose-6-phosphate isomerase (Francisella tularensis subsp. mediasiatica (strain FSC147)).